The sequence spans 304 residues: GTP cyclohydrolase FolE2 (304 aa).

Belongs to the GTP cyclohydrolase IV family.

It catalyses the reaction GTP + H2O = 7,8-dihydroneopterin 3'-triphosphate + formate + H(+). It functions in the pathway cofactor biosynthesis; 7,8-dihydroneopterin triphosphate biosynthesis; 7,8-dihydroneopterin triphosphate from GTP: step 1/1. In terms of biological role, converts GTP to 7,8-dihydroneopterin triphosphate. This Chromohalobacter salexigens (strain ATCC BAA-138 / DSM 3043 / CIP 106854 / NCIMB 13768 / 1H11) protein is GTP cyclohydrolase FolE2.